We begin with the raw amino-acid sequence, 201 residues long: Imidazole glycerol phosphate synthase subunit HisH (201 aa).

Positions 1 to 201 (MIAIIDYGAG…LLKRYEEMIR (201 aa)) constitute a Glutamine amidotransferase type-1 domain. Cysteine 79 functions as the Nucleophile in the catalytic mechanism. Active-site residues include histidine 181 and glutamate 183.

In terms of assembly, heterodimer of HisH and HisF.

The protein resides in the cytoplasm. The enzyme catalyses 5-[(5-phospho-1-deoxy-D-ribulos-1-ylimino)methylamino]-1-(5-phospho-beta-D-ribosyl)imidazole-4-carboxamide + L-glutamine = D-erythro-1-(imidazol-4-yl)glycerol 3-phosphate + 5-amino-1-(5-phospho-beta-D-ribosyl)imidazole-4-carboxamide + L-glutamate + H(+). It catalyses the reaction L-glutamine + H2O = L-glutamate + NH4(+). Its pathway is amino-acid biosynthesis; L-histidine biosynthesis; L-histidine from 5-phospho-alpha-D-ribose 1-diphosphate: step 5/9. Its function is as follows. IGPS catalyzes the conversion of PRFAR and glutamine to IGP, AICAR and glutamate. The HisH subunit catalyzes the hydrolysis of glutamine to glutamate and ammonia as part of the synthesis of IGP and AICAR. The resulting ammonia molecule is channeled to the active site of HisF. The chain is Imidazole glycerol phosphate synthase subunit HisH from Oceanobacillus iheyensis (strain DSM 14371 / CIP 107618 / JCM 11309 / KCTC 3954 / HTE831).